Here is a 132-residue protein sequence, read N- to C-terminus: NADH-quinone oxidoreductase subunit A 2 (132 aa).

The next 3 membrane-spanning stretches (helical) occupy residues 10-30, 66-86, and 93-113; these read WALLAYLFGALALCLLMLGLG, LVAMLFVIFGIEMPFLYLWAV, and WAGFVEATLFVSLLLVGLFYL.

This sequence belongs to the complex I subunit 3 family. NDH-1 is composed of 13 different subunits. Subunits NuoA, H, J, K, L, M, N constitute the membrane sector of the complex.

The protein localises to the cell inner membrane. It catalyses the reaction a quinone + NADH + 5 H(+)(in) = a quinol + NAD(+) + 4 H(+)(out). Functionally, NDH-1 shuttles electrons from NADH, via FMN and iron-sulfur (Fe-S) centers, to quinones in the respiratory chain. The immediate electron acceptor for the enzyme in this species is believed to be ubiquinone. Couples the redox reaction to proton translocation (for every two electrons transferred, four hydrogen ions are translocated across the cytoplasmic membrane), and thus conserves the redox energy in a proton gradient. This chain is NADH-quinone oxidoreductase subunit A 2, found in Pseudomonas aeruginosa (strain UCBPP-PA14).